The sequence spans 417 residues: MDIIEDLKWRGSIKQTTDESGLANLLKHKKISLYVGVDPTAKSIHIGNLIPLTILKRFQNAGHRPVIVVGGGTGMIGDPSGKASERKLLPKDVFDENVSRITKQMTRLFGKDGFEIVNNYDWLSKLDLISFLRDYGKLFSINVMLKRDVVASRLQAGISFTEFTYQILQAIDFYTLFKEKAVQLQVGGADQYGNISSGVELIHKLVGPDTEAFGLTVPLLLKSDGTKFGKSAGGAIWLDPEFLSPYEFYQFFYNQTDADVVKLLKIFTFLNREEIEELADKVKNEPEKREAQRRLAEEVTKFVHGQTAVEEAGKISRILFNGDVENLTASQVAVAFSGVPTIEVADQKTDVVELLVKDKVIEKSRRQAREDLKNGAITINGEKISNVNGVIDPTEKFDGRFIIIRRGKKKYFLAKVQ.

Y34 provides a ligand contact to L-tyrosine. The 'HIGH' region motif lies at 39–48 (PTAKSIHIGN). Residues Y165 and Q169 each contribute to the L-tyrosine site. Residues 227–231 (KFGKS) carry the 'KMSKS' region motif. An ATP-binding site is contributed by K230. One can recognise an S4 RNA-binding domain in the interval 349–416 (TDVVELLVKD…GKKKYFLAKV (68 aa)).

The protein belongs to the class-I aminoacyl-tRNA synthetase family. TyrS type 1 subfamily. In terms of assembly, homodimer.

Its subcellular location is the cytoplasm. It catalyses the reaction tRNA(Tyr) + L-tyrosine + ATP = L-tyrosyl-tRNA(Tyr) + AMP + diphosphate + H(+). Catalyzes the attachment of tyrosine to tRNA(Tyr) in a two-step reaction: tyrosine is first activated by ATP to form Tyr-AMP and then transferred to the acceptor end of tRNA(Tyr). The polypeptide is Tyrosine--tRNA ligase (Oenococcus oeni (strain ATCC BAA-331 / PSU-1)).